A 154-amino-acid polypeptide reads, in one-letter code: Snaclec dabocetin subunit alpha (154 aa).

Residues 1 to 23 (MGRFISVSFGLLVVFLSLSGTGA) form the signal peptide. Disulfide bonds link cysteine 25/cysteine 36, cysteine 53/cysteine 148, and cysteine 123/cysteine 140. Residues 32-149 (HEGHCYKVFK…CGDKNPFICK (118 aa)) enclose the C-type lectin domain.

Belongs to the snaclec family. In terms of assembly, heterodimer of subunits alpha and beta; disulfide-linked. In terms of tissue distribution, expressed by the venom gland.

It localises to the secreted. In terms of biological role, inhibits ristocetin-induced platelet aggregation via binding to platelet glycoprotein Ibalpha (GP1BA). The chain is Snaclec dabocetin subunit alpha from Daboia siamensis (Eastern Russel's viper).